Consider the following 493-residue polypeptide: Cysteine sulfinic acid decarboxylase (493 aa).

An N6-(pyridoxal phosphate)lysine modification is found at K305.

The protein belongs to the group II decarboxylase family. In terms of assembly, homodimer. Requires pyridoxal 5'-phosphate as cofactor. Expressed in brain, liver and kidney.

The catalysed reaction is L-aspartate + H(+) = beta-alanine + CO2. The enzyme catalyses 3-sulfino-L-alanine + H(+) = hypotaurine + CO2. It catalyses the reaction L-cysteate + H(+) = taurine + CO2. The protein operates within organosulfur biosynthesis; taurine biosynthesis; hypotaurine from L-cysteine: step 2/2. Functionally, catalyzes the decarboxylation of L-aspartate, 3-sulfino-L-alanine (cysteine sulfinic acid), and L-cysteate to beta-alanine, hypotaurine and taurine, respectively. The preferred substrate is 3-sulfino-L-alanine. Does not exhibit any decarboxylation activity toward glutamate. This Rattus norvegicus (Rat) protein is Cysteine sulfinic acid decarboxylase (Csad).